We begin with the raw amino-acid sequence, 531 residues long: Peptide chain release factor 3 (531 aa).

In terms of domain architecture, tr-type G spans 13–282; it reads SKRRTFAIIS…GLTQWAPSPM (270 aa). GTP contacts are provided by residues 22 to 29, 90 to 94, and 144 to 147; these read SHPDAGKT, DTPGH, and NKLD.

Belongs to the TRAFAC class translation factor GTPase superfamily. Classic translation factor GTPase family. PrfC subfamily.

It is found in the cytoplasm. In terms of biological role, increases the formation of ribosomal termination complexes and stimulates activities of RF-1 and RF-2. It binds guanine nucleotides and has strong preference for UGA stop codons. It may interact directly with the ribosome. The stimulation of RF-1 and RF-2 is significantly reduced by GTP and GDP, but not by GMP. The polypeptide is Peptide chain release factor 3 (Vibrio cholerae serotype O1 (strain ATCC 39315 / El Tor Inaba N16961)).